Consider the following 152-residue polypeptide: Endoribonuclease YbeY (152 aa).

Positions 112, 116, and 122 each coordinate Zn(2+).

Belongs to the endoribonuclease YbeY family. Requires Zn(2+) as cofactor.

Its subcellular location is the cytoplasm. Functionally, single strand-specific metallo-endoribonuclease involved in late-stage 70S ribosome quality control and in maturation of the 3' terminus of the 16S rRNA. The protein is Endoribonuclease YbeY of Pseudoalteromonas translucida (strain TAC 125).